The sequence spans 68 residues: Protein ShdD (68 aa).

Functionally, involved in the non-oxidative decarboxylation and detoxification of phenolic derivatives under anaerobic conditions, however the precise biochemical function of ShdD in metabolism of phenolic acid is unknown. In Sedimentibacter hydroxybenzoicus (Clostridium hydroxybenzoicum), this protein is Protein ShdD.